A 414-amino-acid polypeptide reads, in one-letter code: Gamma-glutamyl phosphate reductase (414 aa).

This sequence belongs to the gamma-glutamyl phosphate reductase family.

The protein resides in the cytoplasm. The enzyme catalyses L-glutamate 5-semialdehyde + phosphate + NADP(+) = L-glutamyl 5-phosphate + NADPH + H(+). The protein operates within amino-acid biosynthesis; L-proline biosynthesis; L-glutamate 5-semialdehyde from L-glutamate: step 2/2. In terms of biological role, catalyzes the NADPH-dependent reduction of L-glutamate 5-phosphate into L-glutamate 5-semialdehyde and phosphate. The product spontaneously undergoes cyclization to form 1-pyrroline-5-carboxylate. The polypeptide is Gamma-glutamyl phosphate reductase (Clostridium botulinum (strain Alaska E43 / Type E3)).